Reading from the N-terminus, the 401-residue chain is Alpha-(1,4)-fucosyltransferase (401 aa).

Over Met1–Arg4 the chain is Cytoplasmic. The chain crosses the membrane as a helical; Signal-anchor for type II membrane protein span at residues Tyr5–Ile27. Topologically, residues Leu28–Val401 are lumenal. Residue Asn85 is glycosylated (N-linked (GlcNAc...) asparagine).

Belongs to the glycosyltransferase 10 family. As to expression, present in root, stem, flower buds and green siliques.

It localises to the golgi apparatus. The protein localises to the golgi stack membrane. Its pathway is protein modification; protein glycosylation. Functionally, may be involved in cell wall synthesis. Catalyzes alpha-1,4 glycosidic linkages and generates Lewis-a epitopes. The chain is Alpha-(1,4)-fucosyltransferase (FUT13) from Arabidopsis thaliana (Mouse-ear cress).